The chain runs to 1342 residues: DNA-directed RNA polymerase subunit beta (1342 aa).

Residues Lys1022 and Lys1200 each carry the N6-acetyllysine modification.

The protein belongs to the RNA polymerase beta chain family. The RNAP catalytic core consists of 2 alpha, 1 beta, 1 beta' and 1 omega subunit. When a sigma factor is associated with the core the holoenzyme is formed, which can initiate transcription.

It catalyses the reaction RNA(n) + a ribonucleoside 5'-triphosphate = RNA(n+1) + diphosphate. DNA-dependent RNA polymerase catalyzes the transcription of DNA into RNA using the four ribonucleoside triphosphates as substrates. The chain is DNA-directed RNA polymerase subunit beta from Escherichia coli O81 (strain ED1a).